The following is a 101-amino-acid chain: Small ribosomal subunit protein uS14 (101 aa).

It belongs to the universal ribosomal protein uS14 family. Part of the 30S ribosomal subunit. Contacts proteins S3 and S10.

Its function is as follows. Binds 16S rRNA, required for the assembly of 30S particles and may also be responsible for determining the conformation of the 16S rRNA at the A site. The protein is Small ribosomal subunit protein uS14 of Anaplasma phagocytophilum (strain HZ).